Reading from the N-terminus, the 377-residue chain is Chaperone protein DnaJ (377 aa).

In terms of domain architecture, J spans 4–69; sequence DYYEVLGVSK…EKRARYDQMG (66 aa). Residues 131-213 form a CR-type zinc finger; that stretch reads GTEKEIQVPR…CSGKGTTRKV (83 aa). Positions 144, 147, 161, 164, 187, 190, 201, and 204 each coordinate Zn(2+). CXXCXGXG motif repeat units follow at residues 144–151, 161–168, 187–194, and 201–208; these read CTECHGSG, CSQCHGTG, CPACNGSG, and CKECSGKG.

It belongs to the DnaJ family. Homodimer. Zn(2+) is required as a cofactor.

It is found in the cytoplasm. Its function is as follows. Participates actively in the response to hyperosmotic and heat shock by preventing the aggregation of stress-denatured proteins and by disaggregating proteins, also in an autonomous, DnaK-independent fashion. Unfolded proteins bind initially to DnaJ; upon interaction with the DnaJ-bound protein, DnaK hydrolyzes its bound ATP, resulting in the formation of a stable complex. GrpE releases ADP from DnaK; ATP binding to DnaK triggers the release of the substrate protein, thus completing the reaction cycle. Several rounds of ATP-dependent interactions between DnaJ, DnaK and GrpE are required for fully efficient folding. Also involved, together with DnaK and GrpE, in the DNA replication of plasmids through activation of initiation proteins. The protein is Chaperone protein DnaJ of Desulfitobacterium hafniense (strain DSM 10664 / DCB-2).